Here is a 425-residue protein sequence, read N- to C-terminus: Enolase (425 aa).

Glutamine 163 is a (2R)-2-phosphoglycerate binding site. The active-site Proton donor is glutamate 205. 3 residues coordinate Mg(2+): aspartate 242, glutamate 285, and aspartate 312. Residues lysine 337, arginine 366, serine 367, and lysine 388 each contribute to the (2R)-2-phosphoglycerate site. Lysine 337 (proton acceptor) is an active-site residue.

Belongs to the enolase family. It depends on Mg(2+) as a cofactor.

It is found in the cytoplasm. It localises to the secreted. The protein localises to the cell surface. The enzyme catalyses (2R)-2-phosphoglycerate = phosphoenolpyruvate + H2O. Its pathway is carbohydrate degradation; glycolysis; pyruvate from D-glyceraldehyde 3-phosphate: step 4/5. Its function is as follows. Catalyzes the reversible conversion of 2-phosphoglycerate (2-PG) into phosphoenolpyruvate (PEP). It is essential for the degradation of carbohydrates via glycolysis. The sequence is that of Enolase from Cereibacter sphaeroides (strain ATCC 17029 / ATH 2.4.9) (Rhodobacter sphaeroides).